Reading from the N-terminus, the 278-residue chain is Urease accessory protein UreD 3 (278 aa).

It belongs to the UreD family. As to quaternary structure, ureD, UreF and UreG form a complex that acts as a GTP-hydrolysis-dependent molecular chaperone, activating the urease apoprotein by helping to assemble the nickel containing metallocenter of UreC. The UreE protein probably delivers the nickel.

It localises to the cytoplasm. Required for maturation of urease via the functional incorporation of the urease nickel metallocenter. The sequence is that of Urease accessory protein UreD 3 from Bradyrhizobium sp. (strain BTAi1 / ATCC BAA-1182).